A 187-amino-acid polypeptide reads, in one-letter code: Signal peptidase complex catalytic subunit SEC11 (187 aa).

At 1 to 18 (MLSSLSPYMANPRNTLSQ) the chain is on the cytoplasmic side. The chain crosses the membrane as a helical; Signal-anchor for type II membrane protein span at residues 19–39 (VLNFGLVLSSAFMVWKALSVI). Over 40–187 (TNSASPVVVV…MGLMVMLQRE (148 aa)) the chain is Lumenal. Catalysis depends on charge relay system residues Ser-53 and His-92. The N-linked (GlcNAc...) asparagine glycan is linked to Asn-125. Asp-129 functions as the Charge relay system in the catalytic mechanism. The C-terminal short (CTS) helix stretch occupies residues 173-184 (VLLGFMGLMVML).

It belongs to the peptidase S26B family. Component of the signal peptidase complex (SPC) composed of a catalytic subunit SEC11 and three accessory subunits SPC1, SPC2 and SPC3. The complex induces a local thinning of the ER membrane which is used to measure the length of the signal peptide (SP) h-region of protein substrates. This ensures the selectivity of the complex towards h-regions shorter than 18-20 amino acids. SPC associates with the translocon complex.

The protein localises to the endoplasmic reticulum membrane. The enzyme catalyses Cleavage of hydrophobic, N-terminal signal or leader sequences from secreted and periplasmic proteins.. Catalytic component of the signal peptidase complex (SPC) which catalyzes the cleavage of N-terminal signal sequences from nascent proteins as they are translocated into the lumen of the endoplasmic reticulum. Specifically cleaves N-terminal signal peptides that contain a hydrophobic alpha-helix (h-region) shorter than 18-20 amino acids. The protein is Signal peptidase complex catalytic subunit SEC11 (SEC11) of Ajellomyces capsulatus (strain NAm1 / WU24) (Darling's disease fungus).